A 296-amino-acid polypeptide reads, in one-letter code: Phosphatidylglycerol--prolipoprotein diacylglyceryl transferase (296 aa).

4 helical membrane-spanning segments follow: residues 28–48 (WYGLCFSLGILFASLLGIYLA), 72–92 (FALYSLLFIIPGSRIAYILFY), 110–130 (GGLASHGGMLGLILWALIFSW), and 139–159 (LTFLFLCDLCASVFGCAAFMI). Arginine 160 is an a 1,2-diacyl-sn-glycero-3-phospho-(1'-sn-glycerol) binding site. 3 helical membrane passes run 197-217 (VQLYEGMSYLLLSIILFFLSY), 226-246 (GWVTSLGLVGISLIRFFAEFF), and 263-283 (GQILSFPLFVFGLCLGIACFL).

Belongs to the Lgt family.

The protein localises to the cell inner membrane. The catalysed reaction is L-cysteinyl-[prolipoprotein] + a 1,2-diacyl-sn-glycero-3-phospho-(1'-sn-glycerol) = an S-1,2-diacyl-sn-glyceryl-L-cysteinyl-[prolipoprotein] + sn-glycerol 1-phosphate + H(+). It functions in the pathway protein modification; lipoprotein biosynthesis (diacylglyceryl transfer). Its function is as follows. Catalyzes the transfer of the diacylglyceryl group from phosphatidylglycerol to the sulfhydryl group of the N-terminal cysteine of a prolipoprotein, the first step in the formation of mature lipoproteins. This chain is Phosphatidylglycerol--prolipoprotein diacylglyceryl transferase, found in Chlamydia caviae (strain ATCC VR-813 / DSM 19441 / 03DC25 / GPIC) (Chlamydophila caviae).